Consider the following 322-residue polypeptide: Quinolinate synthase (322 aa).

The iminosuccinate site is built by His-37 and Ser-54. A [4Fe-4S] cluster-binding site is contributed by Cys-99. Iminosuccinate contacts are provided by residues 125 to 127 (YIN) and Ser-142. Cys-185 contacts [4Fe-4S] cluster. Residues 211-213 (HPE) and Thr-228 each bind iminosuccinate. [4Fe-4S] cluster is bound at residue Cys-278.

The protein belongs to the quinolinate synthase family. Type 2 subfamily. It depends on [4Fe-4S] cluster as a cofactor.

It is found in the cytoplasm. It catalyses the reaction iminosuccinate + dihydroxyacetone phosphate = quinolinate + phosphate + 2 H2O + H(+). It participates in cofactor biosynthesis; NAD(+) biosynthesis; quinolinate from iminoaspartate: step 1/1. Catalyzes the condensation of iminoaspartate with dihydroxyacetone phosphate to form quinolinate. The polypeptide is Quinolinate synthase (Prosthecochloris aestuarii (strain DSM 271 / SK 413)).